A 58-amino-acid polypeptide reads, in one-letter code: Small ribosomal subunit protein bS21 (58 aa).

It belongs to the bacterial ribosomal protein bS21 family.

The sequence is that of Small ribosomal subunit protein bS21 from Prochlorococcus marinus (strain MIT 9301).